Here is a 163-residue protein sequence, read N- to C-terminus: Cytosolic iron-sulfur assembly component 2B (163 aa).

The protein belongs to the MIP18 family.

The protein localises to the nucleus. The protein resides in the cytoplasm. It is found in the cytoskeleton. Its subcellular location is the spindle. Functionally, component of the cytosolic iron-sulfur (Fe/S) protein assembly machinery. Required for the maturation of extramitochondrial Fe/S proteins. May play a role in chromosome segregation through establishment of sister chromatid cohesion. The polypeptide is Cytosolic iron-sulfur assembly component 2B (Dictyostelium discoideum (Social amoeba)).